A 514-amino-acid polypeptide reads, in one-letter code: MKRCALLTPLLPLALACNNPNDPAHSCASIYSVSSDEAASFCATFTASVVSEPTGVPDAFLSACDSKIKHLSSACSCLGPVDSATATPVPATSTVPASVPVITTSTATATPSRIPVFVPSSSSSSAVVTFKTQIKSSSPGPSSSFAAAATTEAPTSTRASPYTPYTGNGGTTCTVTDYAGISSAVASCSNIMLSDVYAPPSSTIDLQDLQTGAAVIFAGKTTFGDTSDSDFDPIVISGTNLTITGTEDHVIDGNGQAYWDGQGSNGGSDKPDHFIVLKHVYNSVVANLNIQNWPVHCFDIENTESLTLTGITLDNSAGDEPNDSSDGDPAAHNSDGFDIKSSTDLILKDSNVYNQDDCVAITSGTNITVDNMYCSGGHGLSIGSIGGKSDNTVDGVVFSNSQVVNSQNGCRIKTNEGETGEVSNIKYENISLSGISKYGIVVQQDYLNGGPTGEPSNGVSITNVEFTDVTGTMSGGKDYYILCGDGSCENFTFSGVSITGGSDDSCNYPDSGCP.

The signal sequence occupies residues 1 to 16; sequence MKRCALLTPLLPLALA. The disordered stretch occupies residues 134-166; sequence IKSSSPGPSSSFAAAATTEAPTSTRASPYTPYT. Positions 136-166 are enriched in low complexity; that stretch reads SSSPGPSSSFAAAATTEAPTSTRASPYTPYT. A disulfide bridge connects residues Cys-173 and Cys-188. Asn-240 is a glycosylation site (N-linked (GlcNAc...) asparagine). PbH1 repeat units follow at residues 280–302, 303–341, 342–363, 364–384, 393–414, 422–444, and 456–500; these read VYNS…DIEN, TESL…DIKS, STDL…AITS, GTNI…SIGS, VDGV…RIKT, VSNI…VVQQ, and SNGV…SITG. Positions 312-335 are disordered; the sequence is TLDNSAGDEPNDSSDGDPAAHNSD. N-linked (GlcNAc...) asparagine glycosylation is present at Asn-322. Residue Asp-356 is the Proton donor of the active site. Residues Cys-358 and Cys-374 are joined by a disulfide bond. Residue Asn-366 is glycosylated (N-linked (GlcNAc...) asparagine). The active site involves His-378. Asn-429 carries an N-linked (GlcNAc...) asparagine glycan. A disulfide bond links Cys-483 and Cys-488. Asn-490 carries N-linked (GlcNAc...) asparagine glycosylation. Cysteines 506 and 513 form a disulfide.

This sequence belongs to the glycosyl hydrolase 28 family.

The protein resides in the secreted. It catalyses the reaction (1,4-alpha-D-galacturonosyl)n+m + H2O = (1,4-alpha-D-galacturonosyl)n + (1,4-alpha-D-galacturonosyl)m.. Involved in maceration and soft-rotting of plant tissue. Hydrolyzes the 1,4-alpha glycosidic bonds of de-esterified pectate in the smooth region of the plant cell wall. The chain is Probable endopolygalacturonase D (pgaD) from Emericella nidulans (strain FGSC A4 / ATCC 38163 / CBS 112.46 / NRRL 194 / M139) (Aspergillus nidulans).